Reading from the N-terminus, the 402-residue chain is Putative F-box protein At4g22180 (402 aa).

Residues 18–64 (PNSWSELPLDLLTAVFERLSYANFQRAKSVCSSWHSGSRQSVPIQIP) form the F-box domain.

The polypeptide is Putative F-box protein At4g22180 (Arabidopsis thaliana (Mouse-ear cress)).